The following is a 158-amino-acid chain: Large ribosomal subunit protein bL19 (158 aa).

A compositionally biased stretch (basic and acidic residues) spans 119-129 (SDRSRVMKDAA). The segment at 119 to 158 (SDRSRVMKDAARAQQARDAAQGNSSSETQSSTAAVETQGE) is disordered. Residues 130 to 139 (RAQQARDAAQ) show a composition bias toward low complexity. Residues 140–158 (GNSSSETQSSTAAVETQGE) show a composition bias toward polar residues.

This sequence belongs to the bacterial ribosomal protein bL19 family.

Its function is as follows. This protein is located at the 30S-50S ribosomal subunit interface and may play a role in the structure and function of the aminoacyl-tRNA binding site. In Deinococcus geothermalis (strain DSM 11300 / CIP 105573 / AG-3a), this protein is Large ribosomal subunit protein bL19.